Consider the following 321-residue polypeptide: Cytochrome c biogenesis protein CcsA (321 aa).

The next 8 membrane-spanning stretches (helical) occupy residues 1–21 (MIFI…ISVV), 36–56 (LSSS…GLLI), 70–90 (LYES…ILEV), 97–117 (GLGA…TSGL), 143–163 (ILLS…FLII), 229–249 (VIGL…VWAN), 256–276 (WSWD…AIYL), and 290–310 (AIIA…VDLL).

Belongs to the CcmF/CycK/Ccl1/NrfE/CcsA family. May interact with Ccs1.

The protein localises to the plastid. The protein resides in the chloroplast thylakoid membrane. Its function is as follows. Required during biogenesis of c-type cytochromes (cytochrome c6 and cytochrome f) at the step of heme attachment. This is Cytochrome c biogenesis protein CcsA from Cycas taitungensis (Prince sago).